A 79-amino-acid polypeptide reads, in one-letter code: D-alanyl carrier protein (79 aa).

Positions 1–77 (MSTKETVIDL…KIIQGIEELQ (77 aa)) constitute a Carrier domain. Ser35 bears the O-(pantetheine 4'-phosphoryl)serine mark.

This sequence belongs to the DltC family. In terms of processing, 4'-phosphopantetheine is transferred from CoA to a specific serine of apo-DCP.

It is found in the cytoplasm. The protein operates within cell wall biogenesis; lipoteichoic acid biosynthesis. Carrier protein involved in the D-alanylation of lipoteichoic acid (LTA). The loading of thioester-linked D-alanine onto DltC is catalyzed by D-alanine--D-alanyl carrier protein ligase DltA. The DltC-carried D-alanyl group is further transferred to cell membrane phosphatidylglycerol (PG) by forming an ester bond, probably catalyzed by DltD. D-alanylation of LTA plays an important role in modulating the properties of the cell wall in Gram-positive bacteria, influencing the net charge of the cell wall. The polypeptide is D-alanyl carrier protein (Streptococcus equi subsp. equi (strain 4047)).